Reading from the N-terminus, the 342-residue chain is 2-(3-amino-3-carboxypropyl)histidine synthase (342 aa).

Positions 59, 163, and 287 each coordinate [4Fe-4S] cluster.

It belongs to the DPH1/DPH2 family. Homodimer. [4Fe-4S] cluster serves as cofactor.

It carries out the reaction L-histidyl-[translation elongation factor 2] + S-adenosyl-L-methionine = 2-[(3S)-amino-3-carboxypropyl]-L-histidyl-[translation elongation factor 2] + S-methyl-5'-thioadenosine + H(+). It functions in the pathway protein modification; peptidyl-diphthamide biosynthesis. In terms of biological role, catalyzes the first step of diphthamide biosynthesis, i.e. the transfer of the 3-amino-3-carboxypropyl group from S-adenosyl-L-methionine (SAM) to the C2 position of the imidazole ring of the target histidine residue in translation elongation factor 2 (EF-2). This chain is 2-(3-amino-3-carboxypropyl)histidine synthase (dph2), found in Pyrococcus horikoshii (strain ATCC 700860 / DSM 12428 / JCM 9974 / NBRC 100139 / OT-3).